A 331-amino-acid chain; its full sequence is D-lactate dehydrogenase (331 aa).

Residues 156–157, D176, 206–207, 233–235, and D259 contribute to the NAD(+) site; these read RI, MP, and TAR. R235 is an active-site residue. Residue E264 is part of the active site. H296 acts as the Proton donor in catalysis.

The protein belongs to the D-isomer specific 2-hydroxyacid dehydrogenase family.

It catalyses the reaction (R)-lactate + NAD(+) = pyruvate + NADH + H(+). This chain is D-lactate dehydrogenase (ldhD), found in Treponema pallidum (strain Nichols).